Consider the following 304-residue polypeptide: Mycothiol acetyltransferase (304 aa).

2 N-acetyltransferase domains span residues 16-155 (AHVE…RTGL) and 164-304 (VALS…YRRA). Glutamate 46 is a 1D-myo-inositol 2-(L-cysteinylamino)-2-deoxy-alpha-D-glucopyranoside binding site. Residue 87 to 89 (LVV) coordinates acetyl-CoA. Positions 190, 230, and 237 each coordinate 1D-myo-inositol 2-(L-cysteinylamino)-2-deoxy-alpha-D-glucopyranoside. Acetyl-CoA-binding positions include 241 to 243 (LGV) and 248 to 254 (AARGLGS). Tyrosine 275 is a 1D-myo-inositol 2-(L-cysteinylamino)-2-deoxy-alpha-D-glucopyranoside binding site.

This sequence belongs to the acetyltransferase family. MshD subfamily. Monomer.

The enzyme catalyses 1D-myo-inositol 2-(L-cysteinylamino)-2-deoxy-alpha-D-glucopyranoside + acetyl-CoA = mycothiol + CoA + H(+). In terms of biological role, catalyzes the transfer of acetyl from acetyl-CoA to desacetylmycothiol (Cys-GlcN-Ins) to form mycothiol. The sequence is that of Mycothiol acetyltransferase from Clavibacter sepedonicus (Clavibacter michiganensis subsp. sepedonicus).